We begin with the raw amino-acid sequence, 127 residues long: Large ribosomal subunit protein bL19 (127 aa).

It belongs to the bacterial ribosomal protein bL19 family.

In terms of biological role, this protein is located at the 30S-50S ribosomal subunit interface and may play a role in the structure and function of the aminoacyl-tRNA binding site. This is Large ribosomal subunit protein bL19 from Jannaschia sp. (strain CCS1).